A 926-amino-acid chain; its full sequence is MVMADGPRHLQRGPVRVGFYDIEGTLGKGNFAVVKLGRHRITKTEVAIKIIDKSQLDAVNLEKIYREVQIMKMLDHPHIIKLYQVMETKSMLYLVTEYAKNGEIFDYLANHGRLNESEARRKFWQILSAVDYCHGRKIVHRDLKAENLLLDNNMNIKIADFGFGNFFKSGELLATWCGSPPYAAPEVFEGQQYEGPQLDIWSMGVVLYVLVCGALPFDGPTLPILRQRVLEGRFRIPYFMSEDCEHLIRRMLVLDPSKRLTIAQIKEHKWMLIEVPVQRPVLYPQEQENEPSIGEFNEQVLRLMHSLGIDQQKTIESLQNKSYNHFAAIYFLLVERLKSHRSSFPVEQRLDGRQRRPSTIAEQTVAKAQTVGLPVTMHSPNMRLLRSALLPQASNVEAFSFPASGCQAEAAFMEEECVDTPKVNGCLLDPVPPVLVRKGCQSLPSNMMETSIDEGLETEGEAEEDPAHAFEAFQSTRSGQRRHTLSEVTNQLVVMPGAGKIFSMNDSPSLDSVDSEYDMGSVQRDLNFLEDNPSLKDIMLANQPSPRMTSPFISLRPTNPAMQALSSQKREVHNRSPVSFREGRRASDTSLTQGIVAFRQHLQNLARTKGILELNKVQLLYEQIGPEADPNLAPAAPQLQDLASSCPQEEVSQQQESVSTLPASVHPQLSPRQSLETQYLQHRLQKPSLLSKAQNTCQLYCKEPPRSLEQQLQEHRLQQKRLFLQKQSQLQAYFNQMQIAESSYPQPSQQLPLPRQETPPPSQQAPPFSLTQPLSPVLEPSSEQMQYSPFLSQYQEMQLQPLPSTSGPRAAPPLPTQLQQQQPPPPPPPPPPRQPGAAPAPLQFSYQTCELPSAASPAPDYPTPCQYPVDGAQQSDLTGPDCPRSPGLQEAPSSYDPLALSELPGLFDCEMLDAVDPQHNGYVLVN.

The region spanning 20–271 is the Protein kinase domain; sequence YDIEGTLGKG…IAQIKEHKWM (252 aa). The residue at position 25 (T25) is a Phosphothreonine. Residues 26–34 and K49 each bind ATP; that span reads LGKGNFAVV. K53 is subject to N6-acetyllysine; by EP300. D142 acts as the Proton acceptor in catalysis. Residue T175 is modified to Phosphothreonine; by LKB1. The UBA domain occupies 295–335; it reads EFNEQVLRLMHSLGIDQQKTIESLQNKSYNHFAAIYFLLVE. At T484 the chain carries Phosphothreonine. Residues S534 and S587 each carry the phosphoserine modification. Low complexity-rich tracts occupy residues 644 to 659 and 742 to 756; these read SSCPQEEVSQQQESVS and SSYPQPSQQLPLPRQ. Disordered stretches follow at residues 644 to 666, 742 to 776, and 801 to 896; these read SSCPQEEVSQQQESVSTLPASVH, SSYPQPSQQLPLPRQETPPPSQQAPPFSLTQPLSP, and PLPS…SSYD. Residues 765–774 are compositionally biased toward polar residues; sequence APPFSLTQPL. Positions 822 to 834 are enriched in pro residues; that stretch reads QPPPPPPPPPPRQ.

It belongs to the protein kinase superfamily. CAMK Ser/Thr protein kinase family. SNF1 subfamily. As to quaternary structure, interacts with and phosphorylates TORC2/CRTC2. Mg(2+) serves as cofactor. Phosphorylated at Thr-175 by STK11/LKB1 in complex with STE20-related adapter-alpha (STRADA) pseudo kinase and CAB39. Phosphorylated at Thr-484 in response to insulin in adipocytes. In terms of processing, acetylation at Lys-53 inhibits kinase activity. Deacetylated by HDAC6.

It localises to the cytoplasm. Its subcellular location is the endoplasmic reticulum membrane. The enzyme catalyses L-seryl-[protein] + ATP = O-phospho-L-seryl-[protein] + ADP + H(+). It carries out the reaction L-threonyl-[protein] + ATP = O-phospho-L-threonyl-[protein] + ADP + H(+). With respect to regulation, activated by phosphorylation on Thr-175. Its function is as follows. Serine/threonine-protein kinase that plays a role in many biological processes such as fatty acid oxidation, autophagy, immune response or glucose metabolism. Phosphorylates 'Ser-794' of IRS1 in insulin-stimulated adipocytes, potentially modulating the efficiency of insulin signal transduction. Inhibits CREB activity by phosphorylating and repressing TORCs, the CREB-specific coactivators. Phosphorylates EP300 and thus inhibits its histone acetyltransferase activity. In turn, regulates the DNA-binding ability of several transcription factors such as PPARA or MLXIPL. Also plays a role in thymic T-cell development. In Homo sapiens (Human), this protein is Serine/threonine-protein kinase SIK2 (SIK2).